The following is a 525-amino-acid chain: Apolipoprotein N-acyltransferase 2 (525 aa).

6 helical membrane-spanning segments follow: residues 25–45, 56–76, 81–101, 115–135, 153–173, and 200–220; these read ILNF…YYAL, FLYG…LAFF, IFTL…FGFL, FFFA…FLAY, FVDI…AACL, and LIFT…ILSI. The CN hydrolase domain occupies 228-486; that stretch reads LNTVIVQQNT…AESVYTEVPV (259 aa). E274 serves as the catalytic Proton acceptor. Residue K339 is part of the active site. The Nucleophile role is filled by C397. A helical transmembrane segment spans residues 495 to 515; sequence ASYKDWLPIMMFLILIFNIFL.

This sequence belongs to the CN hydrolase family. Apolipoprotein N-acyltransferase subfamily.

The protein resides in the cell inner membrane. The enzyme catalyses N-terminal S-1,2-diacyl-sn-glyceryl-L-cysteinyl-[lipoprotein] + a glycerophospholipid = N-acyl-S-1,2-diacyl-sn-glyceryl-L-cysteinyl-[lipoprotein] + a 2-acyl-sn-glycero-3-phospholipid + H(+). It participates in protein modification; lipoprotein biosynthesis (N-acyl transfer). In terms of biological role, catalyzes the phospholipid dependent N-acylation of the N-terminal cysteine of apolipoprotein, the last step in lipoprotein maturation. The chain is Apolipoprotein N-acyltransferase 2 from Treponema denticola (strain ATCC 35405 / DSM 14222 / CIP 103919 / JCM 8153 / KCTC 15104).